A 374-amino-acid polypeptide reads, in one-letter code: Isocitrate dehydrogenase [NAD] catalytic subunit 6, mitochondrial (374 aa).

The N-terminal 44 residues, 1 to 44 (MTMTAFLARRLIGNGSSQILGTSSSSSGPFISVSRAFFSSSTPI), are a transit peptide targeting the mitochondrion. Substrate contacts are provided by R127, R137, R158, and D245. Mg(2+) is bound by residues D245, D269, and D273.

Belongs to the isocitrate and isopropylmalate dehydrogenases family. In terms of assembly, heterooligomer of catalytic and regulatory subunits. The cofactor is Mg(2+). Mn(2+) is required as a cofactor. In terms of tissue distribution, ubiquitous. Predominantly expressed in leaves.

Its subcellular location is the mitochondrion. The catalysed reaction is D-threo-isocitrate + NAD(+) = 2-oxoglutarate + CO2 + NADH. Functionally, catalytic subunit of the NAD(+)-dependent isocitrate dehydrogenase involved in the oxidative decarboxylation of isocitrate to 2-oxoglutarate. Performs an essential role in the oxidative function of the citric acid cycle. This Arabidopsis thaliana (Mouse-ear cress) protein is Isocitrate dehydrogenase [NAD] catalytic subunit 6, mitochondrial (IDH6).